Consider the following 417-residue polypeptide: MESSTQTKPGSLIVVGTGIESIGQMTLQALSYIEAASKVFYCVIDPATEAFILTKNKNCVDLYQYYDNGKSRMDTYTQMAELMLKEVRNGLDVVGVFYGHPGVFVNPSHRALAIARSEGYQARMLPGVSAEDCLFADLCIDPSNPGCLTYEASDFLIRERPVNVHSHLILFQVGCVGIADFNFSGFDNSKFTILVDRLEQEYGPDHTVVHYIAAMMPHQDPVTDKFTIGQLREPEIAKRVGGVSTFYIPPKARKDINTDIIRLLEFLPAGKVPDKHTQIYPPNQWEPDVPTLPPYGQNEQAAITRLEAHAPPEEYQPLATSKAMTDVMTKLALDPKALAEYKADHRAFAQSVPDLTPQERAALELGDSWAIRCAMKNMPSSLLEAASQSVEEASMNGFPWVIVTGIVGVIGSVVSSA.

The segment at 1–251 (MESSTQTKPG…GVSTFYIPPK (251 aa)) is methyltransferase domain. Catalysis depends on residues Arg72, Tyr76, and Tyr98. Residues Tyr98, His100, Val103, Ala130, Gln172, Ala213, Ser244, and Thr245 each contribute to the S-adenosyl-L-methionine site. Residues 252–378 (ARKDINTDII…WAIRCAMKNM (127 aa)) are clasp domain. A precursor leader region spans residues 379–399 (PSSLLEAASQSVEEASMNGFP). An N-methylvaline mark is found at Val401 and Val403. Thr404 carries the post-translational modification N-methylthreonine. Gly405 carries the post-translational modification N-methylglycine. The residue at position 406 (Ile406) is an N-methylisoleucine. Position 407 is an N-methylvaline (Val407). Gly408 is subject to N-methylglycine. Ile410 carries the N-methylisoleucine modification. An N-methylglycine modification is found at Gly411. Position 413 is an N-methylvaline (Val413).

It in the N-terminal section; belongs to the precorrin methyltransferase family. As to quaternary structure, homodimer. In terms of processing, dbiMA automethylates at Val-401, Val-403, Thr-404, Gly-405, Ile-406, Val-407, Gly-408, Ile-410, Gly-411 and Val-413 before being processed by the prolyloligopeptidase dbiP which likely forms a peptidyl ester upon removal of the follower propeptide, which then undergoes macrocyclization with the N-terminus of the modified core peptide. Peptide backbone alpha-N-methylations change the physicochemical properties of amide bonds to provide structural constraints and other favorable characteristics including biological membrane permeability to peptides.

It functions in the pathway mycotoxin biosynthesis. Functionally, fusion protein of the methyltransferase dbiM and the dendrothelin core peptide; part of the gene cluster that mediates the biosynthesis of dendrothelin A, a highly methylated cyclic dodecapeptide showing slight nematodicidal activity. Dendrothelin A derives from the C-terminus of the dbiMA protein, and it is the dbiMA protein that methylates its own C-terminus using S-adenosyl methionine (SAM). The C-terminus is subsequently cleaved off and macrocyclized by the prolyloligopeptidase dbiP to give the final product. This Dendrothele bispora (strain CBS 962.96) protein is Methyltransferase/ribosomally synthesized cyclic peptide dendrothelin A precursor dbihMA.